We begin with the raw amino-acid sequence, 374 residues long: Spore germination protein GerLB (374 aa).

10 consecutive transmembrane segments (helical) span residues 16-36, 44-64, 86-106, 122-142, 149-169, 192-212, 227-247, 279-301, 313-333, and 341-361; these read IGFAVSSTIIGIGALSMPRDI, DGWIILLLGGLICAVLGWFVT, PVAYTISSILVLTFAALTAYE, TPIQLLSFFFLLVVIYGIAGS, LNVLFLPIVLIAIVLLSLLNI, VKNSIFTFIGFEVALFYAVLL, AVMVNVLSYILIYVTCISVFT, FFTTWIITIYNTTAMYYDVASLL, IFIFISAPIIFMVNMIPSSLN, and YLAWIDMGCVVLAPLLVLIVY.

It belongs to the amino acid-polyamine-organocation (APC) superfamily. Spore germination protein (SGP) (TC 2.A.3.9) family.

The protein resides in the membrane. Contributes to the L-alanine germination response. This is Spore germination protein GerLB (gerLB) from Bacillus cereus.